The sequence spans 250 residues: Uridylate kinase (250 aa).

17 to 20 lines the ATP pocket; it reads KLSG. Glycine 59 is a binding site for UMP. Residues glycine 60 and arginine 64 each contribute to the ATP site. UMP contacts are provided by residues aspartate 79 and 140 to 147; that span reads TGNPYFTT. 3 residues coordinate ATP: threonine 167, tyrosine 173, and aspartate 176.

This sequence belongs to the UMP kinase family. As to quaternary structure, homohexamer.

The protein resides in the cytoplasm. The enzyme catalyses UMP + ATP = UDP + ADP. It functions in the pathway pyrimidine metabolism; CTP biosynthesis via de novo pathway; UDP from UMP (UMPK route): step 1/1. With respect to regulation, inhibited by UTP. Its function is as follows. Catalyzes the reversible phosphorylation of UMP to UDP. The sequence is that of Uridylate kinase from Myxococcus xanthus (strain DK1622).